Reading from the N-terminus, the 508-residue chain is Rhamnogalacturonan I rhamnosyltransferase 1 (508 aa).

A helical; Signal-anchor for type II membrane protein membrane pass occupies residues 41 to 63 (LWMIRAVTVLLLWSCFVHLMALG). N136, N202, and N223 each carry an N-linked (GlcNAc...) asparagine glycan. Residue 277-279 (HLR) coordinates substrate. N-linked (GlcNAc...) asparagine glycosylation is present at N391.

Belongs to the glycosyltransferase GT106 family. As to expression, highly expressed in siliques. Expressed in stems and flowers. Expressed at low levels in roots and rosette leaves.

The protein resides in the golgi apparatus membrane. The enzyme catalyses alpha-D-galacturonosyl-[(1-&gt;2)-alpha-L-rhamnosyl-(1-&gt;4)-alpha-D-galacturonosyl](n) + UDP-beta-L-rhamnose = [(1-&gt;2)-alpha-L-rhamnosyl-(1-&gt;4)-alpha-D-galacturonosyl](n+1) + UDP + H(+). The protein operates within glycan metabolism; pectin biosynthesis. Its function is as follows. Glycosyltransferase involved in the formation of rhamnogalacturonan I (RG-I) oligosaccharides in the seed coat mucilage, which is a specialized cell wall with abundant RG-I. Transfers the rhamnose residue from UDP-beta-L-rhamnose to RG-I oligosaccharides. Prefers RG-I oligosaccharides with a degree of polymerization of 5 or larger than 5. Does not act on oligosaccharides with a degree of polymerization of 4 or smaller than 4. Does not require metal ions for its activity. This Arabidopsis thaliana (Mouse-ear cress) protein is Rhamnogalacturonan I rhamnosyltransferase 1.